We begin with the raw amino-acid sequence, 88 residues long: Small ribosomal subunit protein uS15 (88 aa).

The protein belongs to the universal ribosomal protein uS15 family. Part of the 30S ribosomal subunit. Forms a bridge to the 50S subunit in the 70S ribosome, contacting the 23S rRNA.

In terms of biological role, one of the primary rRNA binding proteins, it binds directly to 16S rRNA where it helps nucleate assembly of the platform of the 30S subunit by binding and bridging several RNA helices of the 16S rRNA. Functionally, forms an intersubunit bridge (bridge B4) with the 23S rRNA of the 50S subunit in the ribosome. This is Small ribosomal subunit protein uS15 from Desulfitobacterium hafniense (strain Y51).